The chain runs to 429 residues: Probable M18 family aminopeptidase 2 (429 aa).

Positions 82, 156, and 401 each coordinate Zn(2+).

It belongs to the peptidase M18 family. Requires Zn(2+) as cofactor.

In Pseudomonas fluorescens (strain Pf0-1), this protein is Probable M18 family aminopeptidase 2.